The chain runs to 1038 residues: MAEENPGALAANVPYLGVDELGASVIVEPGLEGSNAGGRTLPAAAIKFADLTESGSESGDNEAEEPVSAGPDNANAIGEPGTSASAAEENGTVERNSPPPNCAICLSRCRRKCFTDSCMHQFCFKCLCEWSKIKPECPLCKQPFRTIIHNVRTLDDYDRYPVQTTSPVPTENPSLRYHIVRRPRYTPLVQNQAVIVNDIEAAIAAGAAGEDVLSAAEVAAGRRSYSRFEPYRSELMNYYQHDQDASTSGSLSQLWRRYVYDRKLYALPVSDSVTGHFREWSARFYRNNPAQIHRLMPWIHRDIMCLLRNAAHSVNTVMTLMSDLLPMTSLLGPTFRRRLSPYLGERTSHFIHELFNFARSPYDINGYDHVVQYSARVAEEVEVDLLDMVETQSSNGDDLNLEVGDSDADAINAGFSPDWSPPRVRPSTSVIVTNPGATHSFSVTMASDGSELPGISIRRTTNVGSQTVAINLSMRRPAAVASEEPEVIEIDDGDAAANAEVAAINDGSNTSRRHAGATLPVTAHIELESSSSSGDEDECVFVLELKPPHMRTPEQVSLDSNSDSDVVFVNEQHEAAPDAIAENRSTQSPLDLASRDQGLFMGPSTSGAAANRGKNWKLVMAQTRRLDQLRTLRSIRSKKSRRSSMPARSDSGSSPSSCSSSSFHFSSSSDEDSSDSSTTNSEPPKKKSRKRVANNKRSKKESIGKRTSRKRKAKDQNMEMLEQQQISQKKPQRQPESSSDSPSSSDDESGGDSSESSGQPNTNNNKSSSDSDDDSAVNMQLSALRATLKAEATLEDRKPVKLELQLPDDDQAGPLHSRMTPSPREDNEPGCSAPKRRRSCSHSNQSSQSASLASSSTATSSSAPLSSFAWGAAGFSGDPLMRGHPAMEEHDIANSLIELSTLTQPVNIGLFNEHYNSAENSMGMLSNTLCDSPQTLAADDANLENYFDTDADPEASRERDAYSLEAAIDVVGESELQIAEDTATATEEQDEEDEEDEDQEEDDQEEEKAAEEEEEEEEDDDDSDNHDENDENQGLLPY.

Positions 53–96 (ESGSESGDNEAEEPVSAGPDNANAIGEPGTSASAAEENGTVERN) are disordered. An RING-type zinc finger spans residues 102 to 141 (CAICLSRCRRKCFTDSCMHQFCFKCLCEWSKIKPECPLCK). The segment at 495–682 (AAANAEVAAI…SSDSSTTNSE (188 aa)) is interaction with hairy/hry. Disordered stretches follow at residues 627–858 (DQLR…SSTA) and 972–1038 (GESE…LLPY). The segment covering 633–642 (RSIRSKKSRR) has biased composition (basic residues). Residues 643-668 (SSMPARSDSGSSPSSCSSSSFHFSSS) are compositionally biased toward low complexity. Residues 686-699 (KKSRKRVANNKRSK) show a composition bias toward basic residues. The segment covering 723–744 (QQQISQKKPQRQPESSSDSPSS) has biased composition (low complexity). Over residues 792-801 (ATLEDRKPVK) the composition is skewed to basic and acidic residues. Residue threonine 820 is modified to Phosphothreonine. Residue serine 822 is modified to Phosphoserine. Positions 841–858 (SHSNQSSQSASLASSSTA) are enriched in low complexity. Over residues 987–1031 (EEQDEEDEEDEDQEEDDQEEEKAAEEEEEEEEDDDDSDNHDENDE) the composition is skewed to acidic residues.

As to quaternary structure, interacts with hairy/hry, p53 and Top1. Interacts with the gypsy chromatin insulator complex, composed of Cp190, mod(mdg4) and su(Hw); interacts directly with mod(mdg4) and su(Hw). Interacts with Lam/lamin.

Its subcellular location is the nucleus. The protein localises to the chromosome. The enzyme catalyses S-ubiquitinyl-[E2 ubiquitin-conjugating enzyme]-L-cysteine + [acceptor protein]-L-lysine = [E2 ubiquitin-conjugating enzyme]-L-cysteine + N(6)-ubiquitinyl-[acceptor protein]-L-lysine.. Functions as a ubiquitin-protein E3 ligase. Negatively regulates the transcriptional repressor hairy/hry by promoting its ubiquitination and subsequent degradation. Also directs the nuclear organization of the gypsy chromatin insulator. Chromatin insulators are regulatory elements which establish independent domains of transcriptional activity within eukaryotic genomes. Insulators have two defining properties; they can block the communication between an enhancer and a promoter when placed between them, and can also buffer transgenes from position effect variegation (PEV). Insulators are proposed to structure the chromatin fiber into independent domains of differing transcriptional potential by promoting the formation of distinct chromatin loops. This chromatin looping may require the formation of insulator bodies, where homotypic interactions between individual subunits of the insulator complex could promote the clustering of widely spaced insulators at the nuclear periphery. Within the gypsy insulator complex, this protein may promote formation of nuclear insulator bodies by recruiting individual insulator complexes to the nuclear lamina. This is E3 ubiquitin-protein ligase Topors (Topors) from Drosophila melanogaster (Fruit fly).